The primary structure comprises 475 residues: Beta-amyrin 16-alpha-hydroxylase CYP87D16 (475 aa).

Residues 3-23 form a helical membrane-spanning segment; sequence VVGLIGVAVVTILITQYVYKW. Cys423 is a heme binding site.

Belongs to the cytochrome P450 family. Heme is required as a cofactor.

Its subcellular location is the membrane. The enzyme catalyses beta-amyrin + reduced [NADPH--hemoprotein reductase] + O2 = 16alpha-hydroxy-beta-amyrin + oxidized [NADPH--hemoprotein reductase] + H2O + H(+). Involved in the biosynthetic pathway of maesasaponins, which are oleanane-type saponins with diverse biological activities. Catalyzes the C-16alpha oxidation of beta-amyrin to form 16alpha-hydroxy-beta-amyrin. The polypeptide is Beta-amyrin 16-alpha-hydroxylase CYP87D16 (Maesa lanceolata (False assegai)).